The following is a 398-amino-acid chain: Probable beta-1,3-galactosyltransferase 5 (398 aa).

The helical; Signal-anchor for type II membrane protein transmembrane segment at 11–31 (LTMTWVPLLCISCFFLGAIFT) threads the bilayer. N-linked (GlcNAc...) asparagine glycans are attached at residues asparagine 110, asparagine 115, and asparagine 206.

It belongs to the glycosyltransferase 31 family. It depends on Mn(2+) as a cofactor.

The protein resides in the golgi apparatus membrane. The protein operates within protein modification; protein glycosylation. In terms of biological role, beta-1,3-galactosyltransferase that transfers galactose from UDP-galactose to substrates with a terminal glycosyl residue. The protein is Probable beta-1,3-galactosyltransferase 5 (B3GALT5) of Arabidopsis thaliana (Mouse-ear cress).